Here is a 116-residue protein sequence, read N- to C-terminus: POU domain, class 4, transcription factor 1 (116 aa).

A POU-specific domain is found at 1 to 54 (VTQADVGSALANLKIPGVGSLSQSTICRFESLTLSHNNMIALKPILQAWLEEAE). The tract at residues 56–79 (AQREKMNKPELFNGGEKKRKRTSI) is disordered. Residues 72–116 (KKRKRTSIAAPEKRSLEAYFAVQPRPSSEKIAAIAEKLDLKKNVV) constitute a DNA-binding region (homeobox).

The protein belongs to the POU transcription factor family. Class-4 subfamily.

Its subcellular location is the nucleus. It is found in the cytoplasm. Multifunctional transcription factor with different regions mediating its different effects. Acts by binding (via its C-terminal domain) to sequences related to the consensus octamer motif 5'-ATGCAAAT-3' in the regulatory regions of its target genes. Regulates the expression of specific genes involved in differentiation and survival within a subset of neuronal lineages. It has been shown that activation of some of these genes requires its N-terminal domain, maybe through a neuronal-specific cofactor. The polypeptide is POU domain, class 4, transcription factor 1 (POU4F1) (Gallus gallus (Chicken)).